A 334-amino-acid polypeptide reads, in one-letter code: Cytoskeleton protein RodZ (334 aa).

Residues 1-111 (MNTEATHDQN…LGKRRKKRDG (111 aa)) lie on the Cytoplasmic side of the membrane. Residues 19–71 (LRNAREQLGLSQQAVAERLCLKVSTVRDIEEDKAPSDLASTFLRGYIRSYARL) form the HTH cro/C1-type domain. Positions 30–49 (QQAVAERLCLKVSTVRDIEE) form a DNA-binding region, H-T-H motif. The helical; Signal-anchor for type II membrane protein transmembrane segment at 112–132 (WLMSFTWLVLFVVVGLTGAWW) threads the bilayer. Residues 133-334 (WQNHKAHQEE…TLNAEPTPAQ (202 aa)) are Periplasmic-facing. Residues 152-210 (AGLNADKDSGQSVPLDTGAVTSQDTTPAQTAPAPATPVDSTAATQTPAPTAAATQNTVV) are disordered. Positions 161 to 175 (GQSVPLDTGAVTSQD) are enriched in polar residues. Residues 176-210 (TTPAQTAPAPATPVDSTAATQTPAPTAAATQNTVV) are compositionally biased toward low complexity.

Belongs to the RodZ family.

Its subcellular location is the cell inner membrane. Its function is as follows. Cytoskeletal protein that is involved in cell-shape control through regulation of the length of the long axis. The chain is Cytoskeleton protein RodZ from Salmonella gallinarum (strain 287/91 / NCTC 13346).